The chain runs to 114 residues: UPF0473 protein OEOE_1164 (114 aa).

The protein belongs to the UPF0473 family.

In Oenococcus oeni (strain ATCC BAA-331 / PSU-1), this protein is UPF0473 protein OEOE_1164.